Consider the following 501-residue polypeptide: MAMANLARRKGYSLLSSETLRYSFSLRSRAFASGSDENDVVIIGGGPGGYVAAIKAAQLGFKTTCIEKRGALGGTCLNVGCIPSKALLHSSHMYHEAKHSFANHGVKVSNVEIDLAAMMGQKDKAVSNLTRGIEGLFKKNKVTYVKGYGKFVSPSEISVDTIEGENTVVKGKHIIIATGSDVKSLPGVTIDEKKIVSSTGALALSEIPKKLVVIGAGYIGLEMGSVWGRIGSEVTVVEFASEIVPTMDAEIRKQFQRSLEKQGMKFKLKTKVVGVDTSGDGVKLTVEPSAGGEQTIIEADVVLVSAGRTPFTSGLNLDKIGVETDKLGRILVNERFSTNVSGVYAIGDVIPGPMLAHKAEEDGVACVEYLAGKVGHVDYDKVPGVVYTNPEVASVGKTEEQVKETGVEYRVGKFPFMANSRAKAIDNAEGLVKIIAEKETDKILGVHIMAPNAGELIHEAAIALQYDASSEDIARVCHAHPTMSEAIKEAAMATYDKPIHI.

A mitochondrion-targeting transit peptide spans 1-31; it reads MAMANLARRKGYSLLSSETLRYSFSLRSRAF. FAD-binding positions include 67–76, lysine 85, glycine 149, and 178–180; these read EKRGALGGTC and TGS. Cysteine 76 and cysteine 81 form a disulfide bridge. Residues 215–222, glutamate 238, valine 272, and glycine 307 contribute to the NAD(+) site; that span reads GAGYIGLE. FAD contacts are provided by residues aspartate 348 and 354 to 357; that span reads MLAH. The Proton acceptor role is filled by histidine 480.

It belongs to the class-I pyridine nucleotide-disulfide oxidoreductase family. In terms of assembly, homodimer. The cofactor is FAD.

It is found in the mitochondrion matrix. It catalyses the reaction N(6)-[(R)-dihydrolipoyl]-L-lysyl-[protein] + NAD(+) = N(6)-[(R)-lipoyl]-L-lysyl-[protein] + NADH + H(+). In terms of biological role, lipoamide dehydrogenase is a component of the glycine cleavage system as well as of the alpha-ketoacid dehydrogenase complexes. The pyruvate dehydrogenase complex contains multiple copies of three enzymatic components: pyruvate dehydrogenase (E1), dihydrolipoamide acetyltransferase (E2) and lipoamide dehydrogenase (E3). The sequence is that of Dihydrolipoyl dehydrogenase, mitochondrial (LPD) from Pisum sativum (Garden pea).